A 355-amino-acid polypeptide reads, in one-letter code: Peptide chain release factor 1 (355 aa).

An N5-methylglutamine modification is found at Gln-230.

This sequence belongs to the prokaryotic/mitochondrial release factor family. In terms of processing, methylated by PrmC. Methylation increases the termination efficiency of RF1.

It localises to the cytoplasm. Functionally, peptide chain release factor 1 directs the termination of translation in response to the peptide chain termination codons UAG and UAA. The chain is Peptide chain release factor 1 from Geotalea uraniireducens (strain Rf4) (Geobacter uraniireducens).